A 238-amino-acid polypeptide reads, in one-letter code: 2-C-methyl-D-erythritol 4-phosphate cytidylyltransferase (238 aa).

This sequence belongs to the IspD/TarI cytidylyltransferase family. IspD subfamily.

It carries out the reaction 2-C-methyl-D-erythritol 4-phosphate + CTP + H(+) = 4-CDP-2-C-methyl-D-erythritol + diphosphate. It participates in isoprenoid biosynthesis; isopentenyl diphosphate biosynthesis via DXP pathway; isopentenyl diphosphate from 1-deoxy-D-xylulose 5-phosphate: step 2/6. In terms of biological role, catalyzes the formation of 4-diphosphocytidyl-2-C-methyl-D-erythritol from CTP and 2-C-methyl-D-erythritol 4-phosphate (MEP). This Alteromonas mediterranea (strain DSM 17117 / CIP 110805 / LMG 28347 / Deep ecotype) protein is 2-C-methyl-D-erythritol 4-phosphate cytidylyltransferase.